The chain runs to 519 residues: DNA-directed RNA polymerase subunit Rpo2N (519 aa).

This sequence belongs to the RNA polymerase beta chain family. In terms of assembly, part of the RNA polymerase complex.

The protein resides in the cytoplasm. The enzyme catalyses RNA(n) + a ribonucleoside 5'-triphosphate = RNA(n+1) + diphosphate. Its function is as follows. DNA-dependent RNA polymerase (RNAP) catalyzes the transcription of DNA into RNA using the four ribonucleoside triphosphates as substrates. The Rpo2 subunit (Rpo2N and Rpo2C in this organism) is implicated in DNA promoter recognition and in nucleotide binding. The chain is DNA-directed RNA polymerase subunit Rpo2N from Methanothermobacter thermautotrophicus (strain ATCC 29096 / DSM 1053 / JCM 10044 / NBRC 100330 / Delta H) (Methanobacterium thermoautotrophicum).